Consider the following 370-residue polypeptide: Ubiquitin carboxyl-terminal hydrolase 12 (370 aa).

A Required for plasma membrane localization of USP12/WDR20 motif is present at residues 1 to 4 (MEIL). Residues 39 to 369 (FGLVNFGNTC…SGYILFYQSR (331 aa)) enclose the USP domain. Cysteine 48 (nucleophile) is an active-site residue. Positions 146–157 (QEKQNGRLRNGD) are enriched in basic and acidic residues. Residues 146–168 (QEKQNGRLRNGDVDNEDNNSTPD) form a disordered region. Zn(2+) contacts are provided by cysteine 186, cysteine 189, cysteine 233, and cysteine 236. Catalysis depends on histidine 317, which acts as the Proton acceptor.

It belongs to the peptidase C19 family. USP12/USP46 subfamily. As to quaternary structure, interacts with WDR48. Interacts with WDR20; this interaction promotes translocation of the USP12 complex to the plasma membrane. Component of the USP12/WDR20/WDR48 deubiquitinating complex. Component of the USP12/DMWD/WDR48 deubiquitinating complex. Interacts with PHLPP1. Interacts with RBPJ. Interacts with CBP; this interaction blocks the acetyltransferase activity of CREBBP.

The protein resides in the nucleus. It localises to the cytoplasm. It is found in the cell membrane. It carries out the reaction Thiol-dependent hydrolysis of ester, thioester, amide, peptide and isopeptide bonds formed by the C-terminal Gly of ubiquitin (a 76-residue protein attached to proteins as an intracellular targeting signal).. With respect to regulation, activated by interaction with WDR20; WDR48 and DMWD through different allosteric mechanisms. Deubiquitinating enzyme that plays various roles in the regulation of the immune response and inflammation. During TCR engagement and activation, translocates into the cytoplasm and deubiquitinates its substrates LAT and TRAT1 and prevents their lysosome-dependent degradation to stabilize the TCR signaling complex at the plasma membrane. Plays an essential role in the selective LPS-induced macrophage response through the activation of NF-kappa-B pathway. In addition, promotes that antiviral immune response through targeting DNA sensor IFI16 to inhibit its proteasome-dependent degradation. Participates in the interferon signaling pathway and antiviral response independently of its deubiquitinase activity by maintaining nuclear phosphorylated STAT1 levels via inhibition of its CREBBP-mediated acetylation and subsequent dephosphorylation. Plays an intrinsic role in promoting the differentiation, activation and proliferation of CD4(+) T-cell by activating the NF-kappa-B signaling pathway through deubiquitinating and stabilizing B-cell lymphoma/leukemia 10/BCL10. In myeloid-derived suppressor cells promotes the activation of the NF-kappa-B via deubiquitination and stabilization of RELA. Regulates the 'Lys-63'-linked polyubiquitin chains of BAX and thereby modulates the mitochondrial apoptotic process. Negative regulator of NOTCH signaling that specifically deubiquitinates non-activated NOTCH receptors to target them for lysosomal degradation; deubiquitination of NOTCH stimulates its transport form late endosomes to lysosomes. Protects neurons against HTT/huntingtin-induced polyglutamine expansion-dependent neurodegeneration through regulation of autophagic flux. This function is independent of deubiquitinase activity or of other components of the USP12-WDR20-WDR48 deubiquitinating complex. In complex with WDR48, acts as a potential tumor suppressor by positively regulating PHLPP1 stability. This chain is Ubiquitin carboxyl-terminal hydrolase 12 (Usp12), found in Mus musculus (Mouse).